Consider the following 276-residue polypeptide: NAD kinase (276 aa).

The active-site Proton acceptor is the Asp-61. NAD(+) contacts are provided by residues 61–62 (DG), Arg-66, 135–136 (NE), Arg-146, His-163, Asp-165, and Ala-200.

It belongs to the NAD kinase family. It depends on a divalent metal cation as a cofactor.

Its subcellular location is the cytoplasm. The catalysed reaction is NAD(+) + ATP = ADP + NADP(+) + H(+). Its function is as follows. Involved in the regulation of the intracellular balance of NAD and NADP, and is a key enzyme in the biosynthesis of NADP. Catalyzes specifically the phosphorylation on 2'-hydroxyl of the adenosine moiety of NAD to yield NADP. This Chloroflexus aurantiacus (strain ATCC 29366 / DSM 635 / J-10-fl) protein is NAD kinase.